Reading from the N-terminus, the 206-residue chain is Large ribosomal subunit protein uL4 (206 aa).

A disordered region spans residues 43–78 (ARSGNRKQKDREEVKHTTKKPWRQKGTGRARAGMSS). A compositionally biased stretch (basic and acidic residues) spans 49 to 58 (KQKDREEVKH). Over residues 59 to 70 (TTKKPWRQKGTG) the composition is skewed to basic residues.

The protein belongs to the universal ribosomal protein uL4 family. Part of the 50S ribosomal subunit.

Functionally, one of the primary rRNA binding proteins, this protein initially binds near the 5'-end of the 23S rRNA. It is important during the early stages of 50S assembly. It makes multiple contacts with different domains of the 23S rRNA in the assembled 50S subunit and ribosome. In terms of biological role, forms part of the polypeptide exit tunnel. The protein is Large ribosomal subunit protein uL4 of Ralstonia nicotianae (strain ATCC BAA-1114 / GMI1000) (Ralstonia solanacearum).